Here is a 416-residue protein sequence, read N- to C-terminus: Calreticulin (416 aa).

Positions 1–17 (MLLSVPLLLGLLGLAAA) are cleaved as a signal peptide. The N-domain stretch occupies residues 18–197 (DPAIYFKEQF…NSQVESGSLE (180 aa)). Q26 is a Ca(2+) binding site. An N6-acetyllysine modification is found at K48. 2 residues coordinate Ca(2+): K62 and K64. An N6-(2-hydroxyisobutyryl)lysine modification is found at K64. A disulfide bridge links C105 with C137. Residues Y109, K111, Y128, and D135 each coordinate an alpha-D-glucoside. N6-acetyllysine is present on K159. Residues 191 to 202 (VESGSLEDDWDF) form a 1-1 repeat. The interval 191-255 (VESGSLEDDW…DAKKPEDWDE (65 aa)) is 4 X approximate repeats. A disordered region spans residues 193–277 (SGSLEDDWDF…NPEYKGEWKP (85 aa)). Residues 198-308 (DDWDFLPPKK…YSPDANIYAY (111 aa)) form a P-domain region. Residues 207 to 251 (KIKDPDAAKPEDWDERAKIDDPTDSKPEDWDKPEHIPDPDAKKPE) are compositionally biased toward basic and acidic residues. The residue at position 209 (K209) is an N6-acetyllysine. 6 repeat units span residues 210-221 (DPDAAKPEDWDE), 227-238 (DPTDSKPEDWDK), 244-255 (DPDAKKPEDWDE), 259-269 (GEWEPPVIQNP), 273-283 (GEWKPRQIDNP), and 287-297 (GTWIHPEIDNP). The tract at residues 237-270 (DKPEHIPDPDAKKPEDWDEEMDGEWEPPVIQNPE) is interaction with PPIB. Over residues 252–261 (DWDEEMDGEW) the composition is skewed to acidic residues. Residues 259 to 297 (GEWEPPVIQNPEYKGEWKPRQIDNPDYKGTWIHPEIDNP) form a 3 X approximate repeats region. The segment at 309 to 416 (DSFAVLGLDL…DATGQAKDEL (108 aa)) is C-domain. D317 lines the an alpha-D-glucoside pocket. D328 is a binding site for Ca(2+). The interval 350–416 (TKAAEKQMKD…DATGQAKDEL (67 aa)) is disordered. Basic and acidic residues predominate over residues 352 to 379 (AAEKQMKDKQDEEQRLKEEEEDKKRKEE). A compositionally biased stretch (acidic residues) spans 380–408 (EEAEDKEDEDDRDEDEDEEDEKEEDEEDA). The Prevents secretion from ER signature appears at 413–416 (KDEL).

It belongs to the calreticulin family. As to quaternary structure, monomer. Component of an EIF2 complex at least composed of CELF1/CUGBP1, CALR, CALR3, EIF2S1, EIF2S2, HSP90B1 and HSPA5. Interacts with GABARAP, NR3C1 and TRIM21. Interacts with PPIB and SPACA9. Interacts (via P-domain) with PDIA5. Interacts with PDIA3/ERp57. Interacts with CLCC1. As to expression, predentin and odontoblast.

It localises to the endoplasmic reticulum lumen. It is found in the cytoplasm. The protein resides in the cytosol. Its subcellular location is the secreted. The protein localises to the extracellular space. It localises to the extracellular matrix. It is found in the cell surface. The protein resides in the sarcoplasmic reticulum lumen. Its subcellular location is the cytoplasmic vesicle. The protein localises to the secretory vesicle. It localises to the cortical granule. It is found in the cytolytic granule. Its function is as follows. Calcium-binding chaperone that promotes folding, oligomeric assembly and quality control in the endoplasmic reticulum (ER) via the calreticulin/calnexin cycle. This lectin interacts transiently with almost all of the monoglucosylated glycoproteins that are synthesized in the ER. Interacts with the DNA-binding domain of NR3C1 and mediates its nuclear export. Involved in maternal gene expression regulation. May participate in oocyte maturation via the regulation of calcium homeostasis. Present in the cortical granules of non-activated oocytes, is exocytosed during the cortical reaction in response to oocyte activation and might participate in the block to polyspermy. This Rattus norvegicus (Rat) protein is Calreticulin (Calr).